Reading from the N-terminus, the 369-residue chain is Putative agmatine deiminase 2 (369 aa).

Cys-356 functions as the Amidino-cysteine intermediate in the catalytic mechanism.

It belongs to the agmatine deiminase family.

It catalyses the reaction agmatine + H2O = N-carbamoylputrescine + NH4(+). This is Putative agmatine deiminase 2 from Listeria monocytogenes serovar 1/2a (strain ATCC BAA-679 / EGD-e).